A 135-amino-acid polypeptide reads, in one-letter code: Probable histone H2A.8 (135 aa).

This sequence belongs to the histone H2A family. In terms of assembly, the nucleosome is a histone octamer containing two molecules each of H2A, H2B, H3 and H4 assembled in one H3-H4 heterotetramer and two H2A-H2B heterodimers. The octamer wraps approximately 147 bp of DNA.

The protein localises to the nucleus. It is found in the chromosome. Functionally, core component of nucleosome. Nucleosomes wrap and compact DNA into chromatin, limiting DNA accessibility to the cellular machineries which require DNA as a template. Histones thereby play a central role in transcription regulation, DNA repair, DNA replication and chromosomal stability. DNA accessibility is regulated via a complex set of post-translational modifications of histones, also called histone code, and nucleosome remodeling. The chain is Probable histone H2A.8 from Oryza sativa subsp. indica (Rice).